The chain runs to 394 residues: Queuine tRNA-ribosyltransferase (394 aa).

Asp95 serves as the catalytic Proton acceptor. Substrate is bound by residues 95-99 (DSGGF), Asp149, Gln190, and Gly217. Positions 248-254 (GVGTPID) are RNA binding. The active-site Nucleophile is Asp267. The RNA binding; important for wobble base 34 recognition stretch occupies residues 272-276 (TRNAR). Cys305, Cys307, Cys310, and His337 together coordinate Zn(2+). The segment at 375-394 (NDANETVGATESTESTESTE) is disordered.

This sequence belongs to the queuine tRNA-ribosyltransferase family. Homodimer. Within each dimer, one monomer is responsible for RNA recognition and catalysis, while the other monomer binds to the replacement base PreQ1. Requires Zn(2+) as cofactor.

The catalysed reaction is 7-aminomethyl-7-carbaguanine + guanosine(34) in tRNA = 7-aminomethyl-7-carbaguanosine(34) in tRNA + guanine. Its pathway is tRNA modification; tRNA-queuosine biosynthesis. In terms of biological role, catalyzes the base-exchange of a guanine (G) residue with the queuine precursor 7-aminomethyl-7-deazaguanine (PreQ1) at position 34 (anticodon wobble position) in tRNAs with GU(N) anticodons (tRNA-Asp, -Asn, -His and -Tyr). Catalysis occurs through a double-displacement mechanism. The nucleophile active site attacks the C1' of nucleotide 34 to detach the guanine base from the RNA, forming a covalent enzyme-RNA intermediate. The proton acceptor active site deprotonates the incoming PreQ1, allowing a nucleophilic attack on the C1' of the ribose to form the product. After dissociation, two additional enzymatic reactions on the tRNA convert PreQ1 to queuine (Q), resulting in the hypermodified nucleoside queuosine (7-(((4,5-cis-dihydroxy-2-cyclopenten-1-yl)amino)methyl)-7-deazaguanosine). This chain is Queuine tRNA-ribosyltransferase, found in Sorangium cellulosum (strain So ce56) (Polyangium cellulosum (strain So ce56)).